A 152-amino-acid polypeptide reads, in one-letter code: MSTINTDTNKTMPHISVNAQYIKDLSLENPSAPSSLAALDQRPQIDLSLDINITNLSEENFYEVELNIEAIARNEKYKLFQIELKYAGVFNLINIDSEQHPVLLSVHCPAMIFPFARKIIASCTQDAGFQPLMIDPIDFGALYHKKMSEHQN.

It belongs to the SecB family. As to quaternary structure, homotetramer, a dimer of dimers. One homotetramer interacts with 1 SecA dimer.

It is found in the cytoplasm. In terms of biological role, one of the proteins required for the normal export of preproteins out of the cell cytoplasm. It is a molecular chaperone that binds to a subset of precursor proteins, maintaining them in a translocation-competent state. It also specifically binds to its receptor SecA. The protein is Protein-export protein SecB of Rickettsia peacockii (strain Rustic).